The sequence spans 207 residues: ATP-dependent Clp protease proteolytic subunit (207 aa).

The active-site Nucleophile is the Ser-111. His-136 is a catalytic residue.

Belongs to the peptidase S14 family. In terms of assembly, fourteen ClpP subunits assemble into 2 heptameric rings which stack back to back to give a disk-like structure with a central cavity, resembling the structure of eukaryotic proteasomes.

It localises to the cytoplasm. The enzyme catalyses Hydrolysis of proteins to small peptides in the presence of ATP and magnesium. alpha-casein is the usual test substrate. In the absence of ATP, only oligopeptides shorter than five residues are hydrolyzed (such as succinyl-Leu-Tyr-|-NHMec, and Leu-Tyr-Leu-|-Tyr-Trp, in which cleavage of the -Tyr-|-Leu- and -Tyr-|-Trp bonds also occurs).. In terms of biological role, cleaves peptides in various proteins in a process that requires ATP hydrolysis. Has a chymotrypsin-like activity. Plays a major role in the degradation of misfolded proteins. In Burkholderia mallei (strain ATCC 23344), this protein is ATP-dependent Clp protease proteolytic subunit.